Here is a 578-residue protein sequence, read N- to C-terminus: Triokinase/FMN cyclase (578 aa).

The 328-residue stretch at 9–336 (SVEGCADDAL…IDAETTAKAW (328 aa)) folds into the DhaK domain. Residues 56-59 (GSGH), K109, and D114 each bind dihydroxyacetone. H221 serves as the catalytic Tele-hemiaminal-histidine intermediate. The 200-residue stretch at 372-571 (KQMALVLDRI…AAAIFRAILE (200 aa)) folds into the DhaL domain. ATP-binding positions include 401–404 (DGDC), 446–447 (SS), G486, and 494–495 (TM). S511 and S545 each carry phosphoserine. 556–558 (DPG) contacts ATP.

This sequence belongs to the dihydroxyacetone kinase (DAK) family. As to quaternary structure, homodimer. Interacts with IFIH1 (via the CARD domains), the interaction is inhibited by viral infection. The cofactor is Mg(2+). Requires Mn(2+) as cofactor. Co(2+) is required as a cofactor.

It carries out the reaction dihydroxyacetone + ATP = dihydroxyacetone phosphate + ADP + H(+). The enzyme catalyses D-glyceraldehyde + ATP = D-glyceraldehyde 3-phosphate + ADP + H(+). It catalyses the reaction FAD = riboflavin cyclic-4',5'-phosphate + AMP + H(+). With respect to regulation, each activity is inhibited by the substrate(s) of the other. Functionally, catalyzes both the phosphorylation of dihydroxyacetone and of glyceraldehyde, and the splitting of ribonucleoside diphosphate-X compounds among which FAD is the best substrate. Represses IFIH1-mediated cellular antiviral response. The protein is Triokinase/FMN cyclase of Mus musculus (Mouse).